The chain runs to 198 residues: Elongation factor Ts (198 aa).

The tract at residues Ser-82–Val-85 is involved in Mg(2+) ion dislocation from EF-Tu.

It belongs to the EF-Ts family.

It is found in the cytoplasm. In terms of biological role, associates with the EF-Tu.GDP complex and induces the exchange of GDP to GTP. It remains bound to the aminoacyl-tRNA.EF-Tu.GTP complex up to the GTP hydrolysis stage on the ribosome. This is Elongation factor Ts from Desulfosudis oleivorans (strain DSM 6200 / JCM 39069 / Hxd3) (Desulfococcus oleovorans).